Consider the following 450-residue polypeptide: MSGIRFDYSKASGYINTHELDYLGKMTETAHQLLHEKTGAGNEFLGWLDLPKNYDQDEFQRVQNCAEKIKNDSDVLIVIGIGGSYLGSRAAIEMLTHTFHNSLPKDKRQGPEVYFAGHNISSTYLKHLLDIIEGKDISLNVISKSGTTTEPALAFRVLKEYMEKKYGKEETTKRIYATTDQAKGALKQLADEEGYESFIIPDDVGGRFSVLTAVGLLPIAAAGINIEEVMQGAKQALQDFNHSNIDKNSCYQYAIVRNALYRKGKTTEIMVNYEPALHYIGEWWKQLFGESEGKDQKGIFPASVSFSTDLHSMGQYIQEGMRNIFETVLHVENTQEKMIIQPTDADLDGLNYLAGKTVDFVNEKAFEGTLLAHTDGGVPNLIIHIPEITPYYFGYLVYFFEKACAISGYLLGVNPFDQPGVEAYKKNMFALLGKPGFEEAQRELQKRLEK.

Glu290 functions as the Proton donor in the catalytic mechanism. Catalysis depends on residues His311 and Lys425.

Belongs to the GPI family.

The protein localises to the cytoplasm. It carries out the reaction alpha-D-glucose 6-phosphate = beta-D-fructose 6-phosphate. It participates in carbohydrate biosynthesis; gluconeogenesis. The protein operates within carbohydrate degradation; glycolysis; D-glyceraldehyde 3-phosphate and glycerone phosphate from D-glucose: step 2/4. In terms of biological role, catalyzes the reversible isomerization of glucose-6-phosphate to fructose-6-phosphate. The chain is Glucose-6-phosphate isomerase from Alkaliphilus metalliredigens (strain QYMF).